Reading from the N-terminus, the 363-residue chain is LIM and cysteine-rich domains protein 1 (363 aa).

At Ser16 the chain carries Phosphoserine. The PET domain occupies 99–206 (MIMTNPIATG…GEVALPGQGG (108 aa)). A disordered region spans residues 200-234 (ALPGQGGLPKEEGKQQEKPEGAETAPPTTNGSIGD). Residues 208 to 220 (PKEEGKQQEKPEG) are compositionally biased toward basic and acidic residues. LIM zinc-binding domains follow at residues 239–304 (YVCE…SLRP) and 305–363 (RCSG…SKRS).

As to quaternary structure, interacts with beta-dystroglycan. Interacts with GATA1, GATA4 and GATA6.

It is found in the cytoplasm. The protein localises to the nucleus. Its function is as follows. Transcriptional cofactor that restricts GATA6 function by inhibiting DNA-binding, resulting in repression of GATA6 transcriptional activation of downstream target genes. Represses GATA6-mediated trans activation of lung- and cardiac tissue-specific promoters. Inhibits DNA-binding by GATA4 and GATA1 to the cTNC promoter. Plays a critical role in the development of cardiac hypertrophy via activation of calcineurin/nuclear factor of activated T-cells signaling pathway. The protein is LIM and cysteine-rich domains protein 1 (LMCD1) of Bos taurus (Bovine).